The primary structure comprises 295 residues: Multistep phosphorelay regulator 1 (295 aa).

The tract at residues 89–110 is disordered; that stretch reads KSENNQQLAANETAGAPEGTEE. Positions 97–106 are enriched in low complexity; sequence AANETAGAPE. One can recognise an HPt domain in the interval 182 to 284; that stretch reads EHEFSKSIVW…NDFYKDARAY (103 aa). The residue at position 221 (His221) is a Phosphohistidine.

Binds to the msc4 response regulator which is part of a multistep phosphorelay system that transmits oxidative stress signals to the spc1 MAPK cascade. The polypeptide is Multistep phosphorelay regulator 1 (mpr1) (Schizosaccharomyces pombe (strain 972 / ATCC 24843) (Fission yeast)).